An 840-amino-acid chain; its full sequence is MKNWGSSDSGGSEDPPQEDSCLDPLDGDPNSRPVPAKPHIFPTAKSRSRLFGKCDSEEASMDCSYEEGQLASCPAITVSPVVMIPKHEDGPTCARQPSQDSVTAGSEKSLKLYDRRKIFEAVAQNNCEELQSLLLFLQKSKKHLMDSEFKDPETGKTCLLKAMLNLHDGQNDTIPLLLEIARQTDSLKELVNASYTDSYYKGQTALHIAIERRNMALVTLLVENGADVQAAANGDFFKKTKGRPGFYFGELPLSLAACTNQLGIVKFLLQNSWQPADISARDSVGNTVLHALVEVADNTADNTKFVTSMYNEILILGAKLHPTLKLEGLTNKKGLTPLALAARSGKIGVLAYILQREIQEPECRHLSRKFTEWAYGPVHSSLYDLSCIDTCEKNSVLEVIAYSSSETPNRHDMLLVEPLNRLLQDKWDRFVKRIFYFNFFIYCLYMIIFTTAAYYRPVDGLPPYKLKHTVGDYFRVTGEILSVLGGVYFFFRGIQYFLQRRPSLKTLFVDSYSEMLFFVQSLFMLGTVVLYFCHHKEYVASMVFSLAMGWTNMLYYTRGFQQMGIYAVMIEKMILRDLCRFMFVYLVFLFGFSTAVVTLIEDGKNNSVPTESTLHRWRGPGCRPPDSSYNSLYSTCLELFKFTIGMGDLEFTENYDFKAVFIILLLAYVILTYILLLNMLIALMGETVNKIAQESKNIWKLQRAITILDTEKSFLKCMRKAFRSGKLLQVGYTPDGKDDYRWCFRVDEVNWTTWNTNVGIINEDPGNCEGIKRTLSFSLRSGRVSGRNWKNFSLVPLLRDASTRERHPAQPEEVHLRHFAGSLKPEDAEIFKDPVGLGEK.

Residues 1-12 (MKNWGSSDSGGS) show a composition bias toward low complexity. Positions 1 to 43 (MKNWGSSDSGGSEDPPQEDSCLDPLDGDPNSRPVPAKPHIFPT) are disordered. Topologically, residues 1–433 (MKNWGSSDSG…QDKWDRFVKR (433 aa)) are cytoplasmic. ANK repeat units lie at residues 111 to 139 (KLYD…FLQK) and 154 to 186 (TGKT…QTDS). Residues R116, K156, K161, N165, 200–203 (YKGQ), and 211–212 (ER) contribute to the ATP site. ANK repeat units lie at residues 204 to 229 (TALH…ADVQ), 250 to 277 (ELPL…QPAD), 286 to 322 (NTVL…KLHP), and 336 to 359 (TPLA…REIQ). T371 carries the post-translational modification Phosphothreonine; by PKA; in vitro. The stretch at 394-416 (NSVLEVIAYSSSETPNRHDMLLV) is one ANK 7 repeat. The helical transmembrane segment at 434 to 455 (IFYFNFFIYCLYMIIFTTAAYY) threads the bilayer. The Extracellular portion of the chain corresponds to 456-473 (RPVDGLPPYKLKHTVGDY). A helical transmembrane segment spans residues 474–498 (FRVTGEILSVLGGVYFFFRGIQYFL). Residues 499–511 (QRRPSLKTLFVDS) are Cytoplasmic-facing. S503 carries the post-translational modification Phosphoserine; by PKC/PRKCE. A resiniferatoxin-binding site is contributed by 512-513 (YS). The helical transmembrane segment at 512–533 (YSEMLFFVQSLFMLGTVVLYFC) threads the bilayer. The Extracellular portion of the chain corresponds to 534–536 (HHK). The helical transmembrane segment at 537–557 (EYVASMVFSLAMGWTNMLYYT) threads the bilayer. Resiniferatoxin is bound by residues T551 and R558. At 558–560 (RGF) the chain is on the cytoplasmic side. A helical membrane pass occupies residues 561-599 (QQMGIYAVMIEKMILRDLCRFMFVYLVFLFGFSTAVVTL). Residues 600–631 (IEDGKNNSVPTESTLHRWRGPGCRPPDSSYNS) are Extracellular-facing. N-linked (GlcNAc...) asparagine glycosylation is present at N605. Positions 632–653 (LYSTCLELFKFTIGMGDLEFTE) form an intramembrane region, pore-forming. G645 contacts Na(+). The short motif at 645–648 (GMGD) is the Selectivity filter element. Position 648 (D648) interacts with Ca(2+). Topologically, residues 654–657 (NYDF) are extracellular. The chain crosses the membrane as a helical span at residues 658–684 (KAVFIILLLAYVILTYILLLNMLIALM). The Cytoplasmic segment spans residues 685–840 (GETVNKIAQE…FKDPVGLGEK (156 aa)). The AD stretch occupies residues 686–714 (ETVNKIAQESKNIWKLQRAITILDTEKSF). T706 carries the post-translational modification Phosphothreonine. The tract at residues 769–803 (EGIKRTLSFSLRSGRVSGRNWKNFSLVPLLRDAST) is interaction with calmodulin. Phosphoserine is present on S776. Residues 779-794 (LRSGRVSGRNWKNFSL) are required for PIP2-mediated channel inhibition. S802 carries the post-translational modification Phosphoserine; by PKC/PRKCE and PKC/PRKCZ. S822 carries the post-translational modification Phosphoserine.

Belongs to the transient receptor (TC 1.A.4) family. TrpV subfamily. TRPV1 sub-subfamily. In terms of assembly, homotetramer. Interacts with PIRT. May also form a heteromeric channel with TRPV3. Interacts with CALM, PRKCM and CSK. Interacts with PRKCG and NTRK1, probably by forming a trimeric complex. Interacts with the Scolopendra mutilans RhTx toxin. Interacts with TMEM100. Interacts with PACS2. Post-translationally, phosphorylation by PKA reverses capsaicin-induced dephosphorylation at multiple sites. Phosphorylation by CAMKII seems to regulate binding to vanilloids. Phosphorylated and modulated by PRKCE, PRKCM and probably PRKCZ. Dephosphorylation by calcineurin seems to lead to receptor desensitization and phosphorylation by CAMKII recovers activity.

It is found in the postsynaptic cell membrane. The protein resides in the cell projection. It localises to the dendritic spine membrane. Its subcellular location is the cell membrane. It catalyses the reaction Ca(2+)(in) = Ca(2+)(out). The catalysed reaction is Mg(2+)(in) = Mg(2+)(out). The enzyme catalyses Na(+)(in) = Na(+)(out). It carries out the reaction K(+)(in) = K(+)(out). Its activity is regulated as follows. Channel activity is activated via the interaction with PIRT and phosphatidylinositol 4,5-bisphosphate (PIP2). Both PIRT and PIP2 are required to activate channel activity. The channel is sensitized by ATP binding. Repeated stimulation with capsaicin gives rise to progressively smaller responses, due to desensitization. This desensitization is triggered by the influx of calcium ions and is inhibited by elevated ATP levels. Ca(2+) and CALM displace ATP from its binding site and trigger a conformation change that leads to a closed, desensitized channel. Intracellular PIP2 inhibits desensitization. The double-knot toxin (DkTx) from the Chinese earth tiger tarantula activates the channel and traps it in an open conformation. The Scolopendra mutilans RhTx toxin potentiates the heat activation pathway mediated by this channel by binding to the charge-rich outer pore region (in an activated state). Non-selective calcium permeant cation channel involved in detection of noxious chemical and thermal stimuli. Seems to mediate proton influx and may be involved in intracellular acidosis in nociceptive neurons. Involved in mediation of inflammatory pain and hyperalgesia. Sensitized by a phosphatidylinositol second messenger system activated by receptor tyrosine kinases, which involves PKC isozymes and PCL. Activated by vanilloids, like capsaicin, and temperatures higher than 42 degrees Celsius. Upon activation, exhibits a time- and Ca(2+)-dependent outward rectification, followed by a long-lasting refractory state. Mild extracellular acidic pH (6.5) potentiates channel activation by noxious heat and vanilloids, whereas acidic conditions (pH &lt;6) directly activate the channel. Can be activated by endogenous compounds, including 12-hydroperoxytetraenoic acid and bradykinin. Acts as ionotropic endocannabinoid receptor with central neuromodulatory effects. Triggers a form of long-term depression (TRPV1-LTD) mediated by the endocannabinoid anandamine in the hippocampus and nucleus accumbens by affecting AMPA receptors endocytosis. This Canis lupus familiaris (Dog) protein is Transient receptor potential cation channel subfamily V member 1 (TRPV1).